The chain runs to 249 residues: Cobalt transport protein CbiM (249 aa).

The first 27 residues, 1-27 (MKPLHRWLPVVIGAALLIIFESRAAYA), serve as a signal peptide directing secretion. A run of 6 helical transmembrane segments spans residues 33–53 (GFLP…FWVL), 70–90 (LLLG…IPSV), 102–122 (LGTI…VLLF), 134–154 (TLGA…WLIW), 161–181 (APIW…TYVV), and 207–227 (IFAV…VLIF).

Belongs to the CbiM family. Forms an energy-coupling factor (ECF) transporter complex composed of an ATP-binding protein (A component, CbiO), a transmembrane protein (T component, CbiQ) and 2 possible substrate-capture proteins (S components, CbiM and CbiN) of unknown stoichimetry.

It is found in the cell membrane. Its pathway is cofactor biosynthesis; adenosylcobalamin biosynthesis. Functionally, part of the energy-coupling factor (ECF) transporter complex CbiMNOQ involved in cobalt import. The sequence is that of Cobalt transport protein CbiM from Roseiflexus sp. (strain RS-1).